The primary structure comprises 924 residues: Bifunctional glutamine synthetase adenylyltransferase/adenylyl-removing enzyme (924 aa).

The interval 1-422 is adenylyl removase; the sequence is MQTKGCRFFM…QFKKLIQEEV (422 aa). Residues 424–924 form an adenylyl transferase region; the sequence is SPDETDTELE…PASTMALESE (501 aa).

The protein belongs to the GlnE family. Mg(2+) serves as cofactor.

The enzyme catalyses [glutamine synthetase]-O(4)-(5'-adenylyl)-L-tyrosine + phosphate = [glutamine synthetase]-L-tyrosine + ADP. The catalysed reaction is [glutamine synthetase]-L-tyrosine + ATP = [glutamine synthetase]-O(4)-(5'-adenylyl)-L-tyrosine + diphosphate. In terms of biological role, involved in the regulation of glutamine synthetase GlnA, a key enzyme in the process to assimilate ammonia. When cellular nitrogen levels are high, the C-terminal adenylyl transferase (AT) inactivates GlnA by covalent transfer of an adenylyl group from ATP to specific tyrosine residue of GlnA, thus reducing its activity. Conversely, when nitrogen levels are low, the N-terminal adenylyl removase (AR) activates GlnA by removing the adenylyl group by phosphorolysis, increasing its activity. The regulatory region of GlnE binds the signal transduction protein PII (GlnB) which indicates the nitrogen status of the cell. This Acinetobacter baylyi (strain ATCC 33305 / BD413 / ADP1) protein is Bifunctional glutamine synthetase adenylyltransferase/adenylyl-removing enzyme.